We begin with the raw amino-acid sequence, 734 residues long: Methylcrotonoyl-CoA carboxylase subunit alpha, mitochondrial (734 aa).

A mitochondrion-targeting transit peptide spans 1 to 25 (MSMMTVWALRRNVRRKNHSMLVRYI). In terms of domain architecture, Biotin carboxylation spans 37-484 (CIEKILVANR…ETHFIEHHKS (448 aa)). 3 residues coordinate ATP: lysine 152, glutamate 236, and histidine 271. The ATP-grasp domain maps to 156-354 (KRIMGAAGVP…LVEWQIRVAN (199 aa)). 3 residues coordinate Mn(2+): glutamate 311, glutamate 325, and asparagine 327. Arginine 329 is a catalytic residue. Phosphoserine is present on serine 645. Residues 645–666 (SEDEEGVQHRTSSETSSHPPGT) form a disordered region. The Biotinyl-binding domain maps to 657–733 (SETSSHPPGT…SDGSALFRIK (77 aa)). Lysine 699 is modified (N6-biotinyllysine).

As to quaternary structure, probably a heterodimer composed of biotin-containing alpha subunits and beta subunits. It depends on biotin as a cofactor. Mn(2+) is required as a cofactor. In roots, cotyledons, leaves, flowers, ovaries, siliques and embryos.

The protein resides in the mitochondrion matrix. It carries out the reaction 3-methylbut-2-enoyl-CoA + hydrogencarbonate + ATP = 3-methyl-(2E)-glutaconyl-CoA + ADP + phosphate + H(+). It participates in amino-acid degradation; L-leucine degradation; (S)-3-hydroxy-3-methylglutaryl-CoA from 3-isovaleryl-CoA: step 2/3. Biotin-attachment subunit of the 3-methylcrotonyl-CoA carboxylase, an enzyme that catalyzes the conversion of 3-methylcrotonyl-CoA to 3-methylglutaconyl-CoA, a critical step for leucine and isovaleric acid catabolism. The chain is Methylcrotonoyl-CoA carboxylase subunit alpha, mitochondrial (MCCA) from Arabidopsis thaliana (Mouse-ear cress).